Reading from the N-terminus, the 230-residue chain is L-aspartate/glutamate-specific racemase (230 aa).

Residues M10, Q52, and 83 to 85 each bind substrate; that span reads TNT. The Proton donor role is filled by T83. Catalysis depends on C197, which acts as the Proton acceptor. 198-199 contacts substrate; the sequence is TE.

This sequence belongs to the aspartate/glutamate racemases family. As to quaternary structure, homodimer.

The catalysed reaction is L-glutamate = D-glutamate. It catalyses the reaction L-aspartate = D-aspartate. Exhibits racemase activity for both L-glutamate and L-aspartate. The sequence is that of L-aspartate/glutamate-specific racemase from Escherichia coli O157:H7.